A 337-amino-acid chain; its full sequence is ATP-dependent 6-phosphofructokinase (337 aa).

Position 11 (Gly-11) interacts with ATP. Position 21 to 25 (Arg-21 to Arg-25) interacts with ADP. ATP-binding positions include Arg-72 to Tyr-73 and Gly-102 to Ser-105. Position 103 (Asp-103) interacts with Mg(2+). Thr-125–Asp-127 contacts substrate. The active-site Proton acceptor is Asp-127. Arg-154 contacts ADP. Substrate contacts are provided by residues Arg-162 and Met-169 to Arg-171. ADP-binding positions include Gly-185–Asp-187, Lys-212, and Lys-214–His-216. Residues Glu-223, Arg-245, and His-251–Arg-254 contribute to the substrate site.

Belongs to the phosphofructokinase type A (PFKA) family. ATP-dependent PFK group I subfamily. Prokaryotic clade 'B1' sub-subfamily. In terms of assembly, homotetramer. Requires Mg(2+) as cofactor.

The protein resides in the cytoplasm. It carries out the reaction beta-D-fructose 6-phosphate + ATP = beta-D-fructose 1,6-bisphosphate + ADP + H(+). The protein operates within carbohydrate degradation; glycolysis; D-glyceraldehyde 3-phosphate and glycerone phosphate from D-glucose: step 3/4. Its activity is regulated as follows. Allosterically activated by ADP and other diphosphonucleosides, and allosterically inhibited by phosphoenolpyruvate. Its function is as follows. Catalyzes the phosphorylation of D-fructose 6-phosphate to fructose 1,6-bisphosphate by ATP, the first committing step of glycolysis. The sequence is that of ATP-dependent 6-phosphofructokinase from Streptococcus pyogenes serotype M4 (strain MGAS10750).